The primary structure comprises 472 residues: Probable sterol O-acyltransferase 2 (472 aa).

A Phosphoserine modification is found at serine 12. 3 helical membrane passes run 61–81 (FTGFFVLFWVAVSIMIFMSFL), 111–131 (LAMSSMFLLAFPFQKIFALGY), and 135–155 (YGLGVYLYSILILLFLSHCVL). An N-linked (GlcNAc...) asparagine glycan is attached at asparagine 161. A helical transmembrane segment spans residues 170–190 (FILHSMVILMKLHSYNVVNGW). N-linked (GlcNAc...) asparagine glycosylation is present at asparagine 233. 2 consecutive transmembrane segments (helical) span residues 262–282 (IHYLIECALGTFGCIFLLVII) and 317–337 (TVAFLMFPFMLSFLLVFWVIF). A glycan (N-linked (GlcNAc...) asparagine) is linked at asparagine 342. The FYXDWWN motif signature appears at 355–361 (FYDDWWN). Histidine 409 is an active-site residue. Residues 452-472 (IAFWFSIIIGIALIAALYILF) form a helical membrane-spanning segment.

It belongs to the membrane-bound acyltransferase family. Sterol o-acyltransferase subfamily.

It localises to the endoplasmic reticulum membrane. Functionally, sterol O-acyltransferase that catalyzes the formation of stery esters. This chain is Probable sterol O-acyltransferase 2 (are2), found in Schizosaccharomyces pombe (strain 972 / ATCC 24843) (Fission yeast).